The chain runs to 424 residues: Deoxyguanosinetriphosphate triphosphohydrolase-like protein (424 aa).

The span at 1 to 10 (MEGTAPPTPY) shows a compositional bias: pro residues. Residues 1–31 (MEGTAPPTPYDPASVARYAPEPDKRPGRTAF) form a disordered region. A compositionally biased stretch (basic and acidic residues) spans 20 to 31 (PEPDKRPGRTAF). Positions 70–220 (RLTHSLECAQ…MDWADDVAYS (151 aa)) constitute an HD domain.

This sequence belongs to the dGTPase family. Type 2 subfamily.

The chain is Deoxyguanosinetriphosphate triphosphohydrolase-like protein from Streptomyces coelicolor (strain ATCC BAA-471 / A3(2) / M145).